The chain runs to 102 residues: Small ribosomal subunit protein uS10 (102 aa).

The protein belongs to the universal ribosomal protein uS10 family. In terms of assembly, part of the 30S ribosomal subunit.

Functionally, involved in the binding of tRNA to the ribosomes. In Streptococcus pneumoniae (strain CGSP14), this protein is Small ribosomal subunit protein uS10.